The following is a 469-amino-acid chain: MLCLCLYVPVIGEAQTEFQYFESKGLPAELKSIFKLSVFIPSQEFSTYRQWKQKIVQAGDKDLDGQLDFEEFVHYLQDHEKKLRLVFKSLDKKNDGRIDAQEIMQSLRDLGVKISEQQAEKILKSMDKNGTMTIDWNEWRDYHLLHPVENIPEIILYWKHSTIFDVGENLTVPDEFTVEERQTGMWWRHLVAGGGAGAVSRTCTAPLDRLKVLMQVHASRSNNMGIVGGFTQMIREGGARSLWRGNGINVLKIAPESAIKFMAYEQIKRLVGSDQETLRIHERLVAGSLAGAIAQSSIYPMEVLKTRMALRKTGQYSGMLDCARRILAREGVAAFYKGYVPNMLGIIPYAGIDLAVYETLKNAWLQHYAVNSADPGVFVLLACGTMSSTCGQLASYPLALVRTRMQAQASIEGAPEVTMSSLFKHILRTEGAFGLYRGLAPNFMKVIPAVSISYVVYENLKITLGVQSR.

A regulatory N-terminal domain region spans residues Met1 to Asp165. At Met1–His189 the chain is on the mitochondrial intermembrane side. EF-hand domains follow at residues Thr47–Glu80, Asp78–Lys113, and Ile114–Glu149. Residues Asp60, Asp62, Asp64, Gln66, and Glu71 each contribute to the Ca(2+) site. The interval Ile151 to His160 is linker region. Positions Val166–Arg469 are C-terminal transmembrane transporter domain. Solcar repeat units follow at residues Gly184 to Leu270, Leu278 to Ala363, and Pro375 to Thr463. A helical transmembrane segment spans residues Leu190–Leu207. Residues Asp208 to Arg244 are Mitochondrial matrix-facing. A helical transmembrane segment spans residues Gly245–Tyr264. Residues Glu265 to Gly287 are Mitochondrial intermembrane-facing. Residues Ser288–Met301 form a helical membrane-spanning segment. Topologically, residues Glu302–Lys337 are mitochondrial matrix. A helical transmembrane segment spans residues Gly338 to Tyr357. At Glu358 to Leu380 the chain is on the mitochondrial intermembrane side. Residues Leu381–Leu398 form a helical membrane-spanning segment. At Ala399–Arg437 the chain is on the mitochondrial matrix side. The helical transmembrane segment at Gly438–Tyr457 threads the bilayer. Topologically, residues Glu458–Arg469 are mitochondrial intermembrane.

It belongs to the mitochondrial carrier (TC 2.A.29) family. In terms of tissue distribution, widely expressed. Expressed in fetal and adult liver, skeletal muscle, testis, ovary, hippocampus and caudate nucleus. As to expression, expressed in all tissues tested. Expression is restricted to kidney and lung.

It localises to the mitochondrion inner membrane. It catalyses the reaction Mg(2+)(out) + phosphate(in) + ATP(out) = Mg(2+)(in) + phosphate(out) + ATP(in). With respect to regulation, activated by an increase in cytosolic calcium levels that induce a conformational change of the N-terminal regulatory domain, uncapping the channel and allowing transport. Its function is as follows. Electroneutral antiporter that most probably mediates the transport of adenyl nucleotides through the inner mitochondrial membrane. Originally identified as an ATP-magnesium/inorganic phosphate antiporter, it could have a broader specificity for adenyl nucleotides. By regulating the mitochondrial matrix adenyl nucleotide pool could adapt to changing cellular energetic demands and indirectly regulate adenyl nucleotide-dependent metabolic pathways. The polypeptide is Mitochondrial adenyl nucleotide antiporter SLC25A25 (Homo sapiens (Human)).